A 126-amino-acid polypeptide reads, in one-letter code: Small ribosomal subunit protein uS12 (126 aa).

The tract at residues 1 to 26 is disordered; the sequence is MPTINQLVRKGRASETTKSKSPALQD. Residue D89 is modified to 3-methylthioaspartic acid. Residues 101–126 are disordered; that stretch reads SLDTQGVKDRKQARSKYGAKRAKAAK. The span at 113–126 shows a compositional bias: basic residues; sequence ARSKYGAKRAKAAK.

Belongs to the universal ribosomal protein uS12 family. Part of the 30S ribosomal subunit. Contacts proteins S8 and S17. May interact with IF1 in the 30S initiation complex.

Its function is as follows. With S4 and S5 plays an important role in translational accuracy. Interacts with and stabilizes bases of the 16S rRNA that are involved in tRNA selection in the A site and with the mRNA backbone. Located at the interface of the 30S and 50S subunits, it traverses the body of the 30S subunit contacting proteins on the other side and probably holding the rRNA structure together. The combined cluster of proteins S8, S12 and S17 appears to hold together the shoulder and platform of the 30S subunit. This Burkholderia pseudomallei (strain 1106a) protein is Small ribosomal subunit protein uS12.